The primary structure comprises 38 residues: MSGPNPNKQPVELNRTSLYWGLLCIFVLAILFSSYFFN.

The chain crosses the membrane as a helical span at residues 17–37; it reads SLYWGLLCIFVLAILFSSYFF.

It belongs to the PsbL family. As to quaternary structure, PSII is composed of 1 copy each of membrane proteins PsbA, PsbB, PsbC, PsbD, PsbE, PsbF, PsbH, PsbI, PsbJ, PsbK, PsbL, PsbM, PsbT, PsbX, PsbY, PsbZ, Psb30/Ycf12, at least 3 peripheral proteins of the oxygen-evolving complex and a large number of cofactors. It forms dimeric complexes.

The protein resides in the plastid. It is found in the chloroplast thylakoid membrane. One of the components of the core complex of photosystem II (PSII). PSII is a light-driven water:plastoquinone oxidoreductase that uses light energy to abstract electrons from H(2)O, generating O(2) and a proton gradient subsequently used for ATP formation. It consists of a core antenna complex that captures photons, and an electron transfer chain that converts photonic excitation into a charge separation. This subunit is found at the monomer-monomer interface and is required for correct PSII assembly and/or dimerization. The chain is Photosystem II reaction center protein L from Cyanidioschyzon merolae (strain NIES-3377 / 10D) (Unicellular red alga).